The sequence spans 380 residues: O-phospho-L-seryl-tRNA:Cys-tRNA synthase (380 aa).

Residues A86 to R87, N192, and S215 to H217 contribute to the pyridoxal 5'-phosphate site. An N6-(pyridoxal phosphate)lysine modification is found at K218.

This sequence belongs to the SepCysS family. In terms of assembly, homodimer. Interacts with SepRS. Pyridoxal 5'-phosphate is required as a cofactor.

It carries out the reaction O-phospho-L-seryl-tRNA(Cys) + hydrogen sulfide + H(+) = L-cysteinyl-tRNA(Cys) + phosphate. Converts O-phospho-L-seryl-tRNA(Cys) (Sep-tRNA(Cys)) to L-cysteinyl-tRNA(Cys) (Cys-tRNA(Cys)). The polypeptide is O-phospho-L-seryl-tRNA:Cys-tRNA synthase (Methanococcus maripaludis (strain DSM 14266 / JCM 13030 / NBRC 101832 / S2 / LL)).